The primary structure comprises 351 residues: UDP-N-acetylglucosamine--N-acetylmuramyl-(pentapeptide) pyrophosphoryl-undecaprenol N-acetylglucosamine transferase (351 aa).

UDP-N-acetyl-alpha-D-glucosamine-binding positions include 13–15 (TGG), asparagine 125, arginine 161, serine 189, isoleucine 241, 260–265 (ALTVCE), and glutamine 285.

Belongs to the glycosyltransferase 28 family. MurG subfamily.

Its subcellular location is the cell inner membrane. It catalyses the reaction di-trans,octa-cis-undecaprenyl diphospho-N-acetyl-alpha-D-muramoyl-L-alanyl-D-glutamyl-meso-2,6-diaminopimeloyl-D-alanyl-D-alanine + UDP-N-acetyl-alpha-D-glucosamine = di-trans,octa-cis-undecaprenyl diphospho-[N-acetyl-alpha-D-glucosaminyl-(1-&gt;4)]-N-acetyl-alpha-D-muramoyl-L-alanyl-D-glutamyl-meso-2,6-diaminopimeloyl-D-alanyl-D-alanine + UDP + H(+). The protein operates within cell wall biogenesis; peptidoglycan biosynthesis. Functionally, cell wall formation. Catalyzes the transfer of a GlcNAc subunit on undecaprenyl-pyrophosphoryl-MurNAc-pentapeptide (lipid intermediate I) to form undecaprenyl-pyrophosphoryl-MurNAc-(pentapeptide)GlcNAc (lipid intermediate II). The sequence is that of UDP-N-acetylglucosamine--N-acetylmuramyl-(pentapeptide) pyrophosphoryl-undecaprenol N-acetylglucosamine transferase from Haemophilus influenzae (strain 86-028NP).